The following is a 1522-amino-acid chain: Rho guanine nucleotide exchange factor 11 (1522 aa).

The segment at 1–40 (MSVRLPQSIDRLSSLSSLGDSAPERKSPSHHRQPSDASET) is disordered. Ser-2, Ser-14, Ser-16, and Ser-35 each carry phosphoserine. The 80-residue stretch at 47 to 126 (CVIIQKDQHG…LTLLGSSPSS (80 aa)) folds into the PDZ domain. 2 disordered regions span residues 128–175 (GISG…PEVQ) and 200–231 (YGDT…ERFP). The segment covering 149–161 (PSPPPPPPLPPPQ) has biased composition (pro residues). Ser-245 and Ser-251 each carry phosphoserine. Thr-254 carries the phosphothreonine modification. 2 positions are modified to phosphoserine: Ser-255 and Ser-271. Residues 263-286 (AQHHRRQGSDAAVPSTGDQGVDQS) are disordered. Residues 306–486 (ESDIIFQDLE…NTYMSHAGIR (181 aa)) form the RGSL domain. A coiled-coil region spans residues 444–470 (LRERQVAEKQLAALGDILSKYEEDRSA). A disordered region spans residues 490–555 (ARPSNTAEKA…SSQSTFHIPL (66 aa)). Positions 521–533 (SKKEKDALEDKKR) are enriched in basic and acidic residues. A phosphoserine mark is found at Ser-556, Ser-635, and Ser-663. Residues 573–680 (ENNQQYDAPE…FTPKMGRRSI (108 aa)) form a disordered region. Positions 601 to 637 (DSSRSEIRLGRSESLKGREEMKRSRKAENVPRSRSDV) are enriched in basic and acidic residues. The segment covering 651–664 (SASSSTSSLSTRSL) has biased composition (low complexity). A phosphothreonine mark is found at Thr-668 and Thr-672. Residues 734–923 (DRQEVINELF…REILKYVNEA (190 aa)) enclose the DH domain. One can recognise a PH domain in the interval 965–1079 (KMIHEGPLTW…WMELLEEAVR (115 aa)). The segment at 1084 to 1141 (HPGAAPMPVHPPPPGPREPAQQGPTPSRVELDDSDVFHGEPEPEELPGGTGSQQRVQG) is disordered. Residues 1091 to 1100 (PVHPPPPGPR) are compositionally biased toward pro residues. Over residues 1112 to 1124 (VELDDSDVFHGEP) the composition is skewed to basic and acidic residues. Residue Ser-1155 is modified to Phosphoserine. Disordered stretches follow at residues 1223-1320 (ETQA…AGGY), 1332-1423 (KVVP…RDVG), and 1453-1522 (LGGE…SPGP). A compositionally biased stretch (polar residues) spans 1236–1245 (PTPSVISVTS). Phosphoserine is present on residues Ser-1295 and Ser-1300. Over residues 1338 to 1353 (PESGQSEPGPPEVEGG) the composition is skewed to low complexity. Ser-1457 and Ser-1458 each carry phosphoserine. Thr-1462 and Thr-1475 each carry phosphothreonine. Phosphoserine is present on Ser-1480. Residues 1503–1513 (DGSDAPLEDST) show a composition bias toward acidic residues.

As to quaternary structure, interacts with GNA12 and GNA13 through the RGS domain. Interacts with RHOA, PLXNB1 and PLXNB2. Interacts with SLC1A6. Interacts (via DH domain) with GCSAM (via C-terminus). Found in a complex with ARHGEF11 and ARHGEF12; binding to ARHGEF11 and ARHGEF12 enhances CDC42 GEF activity of PLEKHG4B, and PLEKHG4B, in turn, inhibits ARHGEF11- and ARHGEF12-mediated RHOA activation. In terms of processing, phosphorylated by MAP kinase p38 (MAPK11, MAPK12, MAPK13 and/or MAPK14). Ubiquitinated by the BCR(KLHL20) E3 ubiquitin ligase complex when previously phosphorylated by MAP kinase p38 (MAPK11, MAPK12, MAPK13 and/or MAPK14), leading to its degradation, thereby restricting RhoA activity and facilitating growth cone spreading and neurite outgrowth. As to expression, ubiquitously expressed.

The protein localises to the cytoplasm. The protein resides in the membrane. May play a role in the regulation of RhoA GTPase by guanine nucleotide-binding alpha-12 (GNA12) and alpha-13 (GNA13). Acts as guanine nucleotide exchange factor (GEF) for RhoA GTPase and may act as GTPase-activating protein (GAP) for GNA12 and GNA13. Involved in neurotrophin-induced neurite outgrowth. The sequence is that of Rho guanine nucleotide exchange factor 11 (ARHGEF11) from Homo sapiens (Human).